The primary structure comprises 315 residues: O-antigen chain rhamnosyltransferase WbaN (315 aa).

It belongs to the glycosyltransferase 2 family.

It carries out the reaction alpha-D-galactosyl-di-trans,octa-cis-undecaprenyl diphosphate + dTDP-beta-L-rhamnose = alpha-L-rhamnosyl-(1-&gt;3)-alpha-D-galactosyl-1-diphospho-di-trans,octa-cis-undecaprenol + dTDP + H(+). It participates in bacterial outer membrane biogenesis; LPS O-antigen biosynthesis. Its function is as follows. Rhamnosyltransferase involved in the biosynthesis of the repeat unit of the lipopolysaccharide (LPS) O-antigen region. Catalyzes the addition of a rhamnose to the galactosyl-undecaprenyl diphosphate intermediate. The chain is O-antigen chain rhamnosyltransferase WbaN from Salmonella anatum.